Consider the following 43-residue polypeptide: Protein PsbN (43 aa).

A helical membrane pass occupies residues 5–27 (TLVAISISCLLVSFTGYALYTAF).

It belongs to the PsbN family.

Its subcellular location is the plastid. The protein resides in the chloroplast thylakoid membrane. May play a role in photosystem I and II biogenesis. The polypeptide is Protein PsbN (Cryptomeria japonica (Japanese cedar)).